Here is a 389-residue protein sequence, read N- to C-terminus: S-adenosylmethionine synthase (389 aa).

Residue His17 participates in ATP binding. Asp19 contributes to the Mg(2+) binding site. Glu45 contributes to the K(+) binding site. Residues Glu58 and Gln101 each contribute to the L-methionine site. The flexible loop stretch occupies residues 101-111 (QSPDIAQGVNP). ATP contacts are provided by residues 168 to 170 (DGK), 234 to 235 (RF), Asp243, 249 to 250 (RK), and Lys270. Asp243 contributes to the L-methionine binding site. Lys274 contacts L-methionine.

The protein belongs to the AdoMet synthase family. Homotetramer; dimer of dimers. Requires Mg(2+) as cofactor. The cofactor is K(+).

Its subcellular location is the cytoplasm. It catalyses the reaction L-methionine + ATP + H2O = S-adenosyl-L-methionine + phosphate + diphosphate. It participates in amino-acid biosynthesis; S-adenosyl-L-methionine biosynthesis; S-adenosyl-L-methionine from L-methionine: step 1/1. Its function is as follows. Catalyzes the formation of S-adenosylmethionine (AdoMet) from methionine and ATP. The overall synthetic reaction is composed of two sequential steps, AdoMet formation and the subsequent tripolyphosphate hydrolysis which occurs prior to release of AdoMet from the enzyme. The polypeptide is S-adenosylmethionine synthase (Syntrophobacter fumaroxidans (strain DSM 10017 / MPOB)).